The sequence spans 505 residues: ATP synthase subunit alpha (505 aa).

170–177 is a binding site for ATP; that stretch reads GDRQTGKT.

It belongs to the ATPase alpha/beta chains family. As to quaternary structure, F-type ATPases have 2 components, CF(1) - the catalytic core - and CF(0) - the membrane proton channel. CF(1) has five subunits: alpha(3), beta(3), gamma(1), delta(1), epsilon(1). CF(0) has four main subunits: a(1), b(1), b'(1) and c(9-12).

Its subcellular location is the cellular thylakoid membrane. The enzyme catalyses ATP + H2O + 4 H(+)(in) = ADP + phosphate + 5 H(+)(out). In terms of biological role, produces ATP from ADP in the presence of a proton gradient across the membrane. The alpha chain is a regulatory subunit. The sequence is that of ATP synthase subunit alpha from Synechococcus sp. (strain RCC307).